The primary structure comprises 493 residues: Catalase A (493 aa).

The disordered stretch occupies residues 1-24 (MKRKLTGLFGAPVSDRENSMTAGP). Catalysis depends on residues histidine 53 and asparagine 126. Tyrosine 336 is a binding site for heme.

It belongs to the catalase family. In terms of assembly, homodimer. Heme serves as cofactor.

The enzyme catalyses 2 H2O2 = O2 + 2 H2O. Its function is as follows. Decomposes hydrogen peroxide into water and oxygen; serves to protect cells from the toxic effects of hydrogen peroxide. The polypeptide is Catalase A (katA) (Staphylococcus xylosus).